The sequence spans 348 residues: uncharacterized protein (348 aa).

The NADP(+) site is built by Lys-41 and Tyr-170. Ser-339 bears the Phosphoserine mark.

Belongs to the NAD(P)-dependent epimerase/dehydratase family. Dihydroflavonol-4-reductase subfamily.

This is an uncharacterized protein from Saccharomyces cerevisiae (strain ATCC 204508 / S288c) (Baker's yeast).